The following is a 463-amino-acid chain: Probable ECA polymerase (463 aa).

Transmembrane regions (helical) follow at residues 6–26, 39–59, 65–85, 112–132, 154–174, 180–200, 201–221, 222–242, 340–360, 377–397, and 408–428; these read FGGL…LTWM, FSLL…VLVF, VVPV…YAVY, ANLT…IFFL, GVAL…VYFL, AWLL…VIVG, GTRA…IVRG, WITL…MFWL, LVVM…GLVI, YKAA…IVLT, and VVFF…LYWL.

It belongs to the WzyE family. Probably part of a complex composed of WzxE, WzyE and WzzE.

It localises to the cell inner membrane. Its pathway is bacterial outer membrane biogenesis; enterobacterial common antigen biosynthesis. In terms of biological role, probably involved in the polymerization of enterobacterial common antigen (ECA) trisaccharide repeat units. The protein is Probable ECA polymerase of Pectobacterium atrosepticum (strain SCRI 1043 / ATCC BAA-672) (Erwinia carotovora subsp. atroseptica).